The primary structure comprises 229 residues: MPKKKGFTPLPYLASIVFLPWWVSLSFNKSLEPWVTNWWNTRQSETFLNDIQERNVLERFIELEELFLLDEMLKENPETRMKNLRIGIHNETIQLVKTDNEYHLHTILHFSTNIICFAILSVYSILGNEELVILNSWVQEFLYNLSDTIKAFSILLVTDLWIGFHSPHGWELMIGSVYNDFGLAHNEQIISGLVSTFPVILDTIVKYWIFHYLNRVSPSLVVIYHSMND.

4 helical membrane-spanning segments follow: residues 7 to 27, 114 to 134, 154 to 174, and 189 to 209; these read FTPL…SLSF, IICF…LVIL, ILLV…ELMI, and IISG…KYWI.

This sequence belongs to the CemA family.

It is found in the plastid. Its subcellular location is the chloroplast inner membrane. It carries out the reaction K(+)(in) + H(+)(out) = K(+)(out) + H(+)(in). Its function is as follows. Contributes to K(+)/H(+) antiport activity by supporting proton efflux to control proton extrusion and homeostasis in chloroplasts in a light-dependent manner to modulate photosynthesis. Prevents excessive induction of non-photochemical quenching (NPQ) under continuous-light conditions. Indirectly promotes efficient inorganic carbon uptake into chloroplasts. This chain is Potassium/proton antiporter CemA, found in Acorus calamus var. americanus (American sweet flag).